Reading from the N-terminus, the 525-residue chain is Putative ribose/galactose/methyl galactoside import ATP-binding protein (525 aa).

A disordered region spans residues 1–20 (MSGSATASPPAKPDLPSSDG). ABC transporter domains follow at residues 33 to 269 (LEIS…VGRE) and 279 to 523 (KPAG…SGHR). 65–72 (GENGAGKS) is an ATP binding site.

The protein belongs to the ABC transporter superfamily. Carbohydrate importer 2 (CUT2) (TC 3.A.1.2) family.

The protein localises to the cell inner membrane. It carries out the reaction D-ribose(out) + ATP + H2O = D-ribose(in) + ADP + phosphate + H(+). The enzyme catalyses D-galactose(out) + ATP + H2O = D-galactose(in) + ADP + phosphate + H(+). In terms of biological role, part of an ABC transporter complex involved in carbohydrate import. Could be involved in ribose, galactose and/or methyl galactoside import. Responsible for energy coupling to the transport system. The polypeptide is Putative ribose/galactose/methyl galactoside import ATP-binding protein (Pseudomonas syringae pv. tomato (strain ATCC BAA-871 / DC3000)).